The following is a 255-amino-acid chain: Electron transfer flavoprotein beta subunit lysine methyltransferase (255 aa).

The transit peptide at methionine 1–valine 32 directs the protein to the mitochondrion.

It belongs to the methyltransferase superfamily. ETFBKMT family. Interacts with HSPD1; this protein may possibly be a methylation substrate.

Its subcellular location is the cytoplasm. It is found in the mitochondrion matrix. It catalyses the reaction L-lysyl-[protein] + 3 S-adenosyl-L-methionine = N(6),N(6),N(6)-trimethyl-L-lysyl-[protein] + 3 S-adenosyl-L-homocysteine + 3 H(+). Protein-lysine methyltransferase that selectively trimethylates the flavoprotein ETFB in mitochondria. Thereby, may negatively regulate the function of ETFB in electron transfer from Acyl-CoA dehydrogenases to the main respiratory chain. This is Electron transfer flavoprotein beta subunit lysine methyltransferase from Rattus norvegicus (Rat).